Consider the following 370-residue polypeptide: Cytochrome b (370 aa).

4 helical membrane passes run 25–45 (FGSMLLACLTLQLLTGFFLAV), 69–90 (WMMQNLHAIGASMFFICIYIHI), 105–125 (WLSGTTLLIMLMATAFFGYVL), and 170–190 (FFALHFILPFGIISLSSLHIL). Positions 75 and 89 each coordinate heme b. Residues H174 and H188 each contribute to the heme b site. Residue H193 participates in a ubiquinone binding. 4 helical membrane passes run 218–238 (YKDMLMLTIMTIMLLTIVSFF), 280–300 (LGGALALTMSIMILLTMPFTH), 312–332 (LMQLTFWTFTATFLVISWTAT), and 339–358 (FTTISQVAALMYFLFFISNP).

Belongs to the cytochrome b family. In terms of assembly, the cytochrome bc1 complex contains 3 respiratory subunits (MT-CYB, CYC1 and UQCRFS1), 2 core proteins (UQCRC1 and UQCRC2) and probably 6 low-molecular weight proteins. The cofactor is heme b.

The protein resides in the mitochondrion inner membrane. Its function is as follows. Component of the ubiquinol-cytochrome c reductase complex (complex III or cytochrome b-c1 complex) that is part of the mitochondrial respiratory chain. The b-c1 complex mediates electron transfer from ubiquinol to cytochrome c. Contributes to the generation of a proton gradient across the mitochondrial membrane that is then used for ATP synthesis. The sequence is that of Cytochrome b (MT-CYB) from Chilabothrus striatus (Haitian boa constrictor).